We begin with the raw amino-acid sequence, 201 residues long: Dephospho-CoA kinase (201 aa).

Positions 7-201 (AIALSGGIGT…IETIKKDFHV (195 aa)) constitute a DPCK domain. 15–20 (GTGKST) is an ATP binding site.

It belongs to the CoaE family.

The protein resides in the cytoplasm. The catalysed reaction is 3'-dephospho-CoA + ATP = ADP + CoA + H(+). It functions in the pathway cofactor biosynthesis; coenzyme A biosynthesis; CoA from (R)-pantothenate: step 5/5. In terms of biological role, catalyzes the phosphorylation of the 3'-hydroxyl group of dephosphocoenzyme A to form coenzyme A. The sequence is that of Dephospho-CoA kinase from Wolinella succinogenes (strain ATCC 29543 / DSM 1740 / CCUG 13145 / JCM 31913 / LMG 7466 / NCTC 11488 / FDC 602W) (Vibrio succinogenes).